The sequence spans 140 residues: ATP synthase epsilon chain (140 aa).

This sequence belongs to the ATPase epsilon chain family. F-type ATPases have 2 components, CF(1) - the catalytic core - and CF(0) - the membrane proton channel. CF(1) has five subunits: alpha(3), beta(3), gamma(1), delta(1), epsilon(1). CF(0) has three main subunits: a, b and c.

It is found in the cell inner membrane. Its function is as follows. Produces ATP from ADP in the presence of a proton gradient across the membrane. The sequence is that of ATP synthase epsilon chain from Chromobacterium violaceum (strain ATCC 12472 / DSM 30191 / JCM 1249 / CCUG 213 / NBRC 12614 / NCIMB 9131 / NCTC 9757 / MK).